Consider the following 442-residue polypeptide: 26S proteasome regulatory subunit 6A (442 aa).

Serine 12 is subject to Phosphoserine. Position 230–237 (230–237 (GPPGTGKT)) interacts with ATP. At serine 379 the chain carries Phosphoserine.

It belongs to the AAA ATPase family. Component of the 19S proteasome regulatory particle complex. The 26S proteasome consists of a 20S core particle (CP) and two 19S regulatory subunits (RP). The regulatory particle is made of a lid composed of 9 subunits, a base containing 6 ATPases including PSMC3 and few additional components. Interacts with PAAF1.

Its subcellular location is the cytoplasm. The protein localises to the nucleus. Component of the 26S proteasome, a multiprotein complex involved in the ATP-dependent degradation of ubiquitinated proteins. This complex plays a key role in the maintenance of protein homeostasis by removing misfolded or damaged proteins, which could impair cellular functions, and by removing proteins whose functions are no longer required. Therefore, the proteasome participates in numerous cellular processes, including cell cycle progression, apoptosis, or DNA damage repair. PSMC3 belongs to the heterohexameric ring of AAA (ATPases associated with diverse cellular activities) proteins that unfolds ubiquitinated target proteins that are concurrently translocated into a proteolytic chamber and degraded into peptides. The chain is 26S proteasome regulatory subunit 6A (Psmc3) from Mus musculus (Mouse).